The sequence spans 107 residues: Large ribosomal subunit protein P2 (107 aa).

The span at 63–83 (SSVPSGGSAPAAAAPSGGAAP) shows a compositional bias: low complexity. Positions 63–107 (SSVPSGGSAPAAAAPSGGAAPKAEEKKKEEPKEESDDDMGFGLFD) are disordered. Residues 84-93 (KAEEKKKEEP) show a composition bias toward basic and acidic residues.

It belongs to the eukaryotic ribosomal protein P1/P2 family. P1 and P2 exist as dimers at the large ribosomal subunit. Phosphorylated.

Functionally, plays an important role in the elongation step of protein synthesis. This Caenorhabditis elegans protein is Large ribosomal subunit protein P2.